A 545-amino-acid polypeptide reads, in one-letter code: Germacrene D synthase 1 (545 aa).

Residues Asp298, Asp302, Asn443, and Glu451 each contribute to the Mg(2+) site. The DDXXD motif signature appears at 298–302; that stretch reads DDTFD.

Belongs to the terpene synthase family. The cofactor is Mg(2+).

The protein resides in the cytoplasm. It localises to the cytosol. It carries out the reaction (2E,6E)-farnesyl diphosphate = (-)-germacrene D + diphosphate. It functions in the pathway secondary metabolite biosynthesis; terpenoid biosynthesis. In terms of biological role, sesquiterpene synthase involved in germacrene D biosynthesis. Also produces at least 13 additional sesquiterpene products, including germacrene C and (+)-germacrene A, beta-ylangene, (E)-beta-farnesene and (E,E)-alpha-farnesene. The sequence is that of Germacrene D synthase 1 from Pogostemon cablin (Patchouli).